A 738-amino-acid chain; its full sequence is Catalase-peroxidase (738 aa).

An N-terminal signal peptide occupies residues 1–24 (MEPLFPKRLLSIAVLCVASATAQA). A cross-link (tryptophyl-tyrosyl-methioninium (Trp-Tyr) (with M-252)) is located at residues 104–226 (WHAAGTYRMI…FGATEMGLIY (123 aa)). His-105 serves as the catalytic Proton acceptor. The tract at residues 191–213 (EEVNWGPEGQWLTDRRHSGDRKL) is disordered. Residues 203–213 (TDRRHSGDRKL) show a composition bias toward basic and acidic residues. The segment at residues 226–252 (YVNPEGPHGNPDPIAAAHDIRQAFGRM) is a cross-link (tryptophyl-tyrosyl-methioninium (Tyr-Met) (with W-104)). His-267 contacts heme b.

Belongs to the peroxidase family. Peroxidase/catalase subfamily. Homodimer or homotetramer. The cofactor is heme b. In terms of processing, formation of the three residue Trp-Tyr-Met cross-link is important for the catalase, but not the peroxidase activity of the enzyme.

It catalyses the reaction H2O2 + AH2 = A + 2 H2O. The enzyme catalyses 2 H2O2 = O2 + 2 H2O. Bifunctional enzyme with both catalase and broad-spectrum peroxidase activity. The chain is Catalase-peroxidase from Saccharophagus degradans (strain 2-40 / ATCC 43961 / DSM 17024).